The sequence spans 278 residues: Diaminopimelate epimerase (278 aa).

The substrate site is built by asparagine 13, glutamine 46, and asparagine 66. Cysteine 75 (proton donor) is an active-site residue. Residues 76–77 (GN), asparagine 159, asparagine 192, and 210–211 (ER) contribute to the substrate site. Cysteine 219 (proton acceptor) is an active-site residue. 220 to 221 (GT) is a substrate binding site.

The protein belongs to the diaminopimelate epimerase family. Homodimer.

The protein resides in the cytoplasm. It catalyses the reaction (2S,6S)-2,6-diaminopimelate = meso-2,6-diaminopimelate. The protein operates within amino-acid biosynthesis; L-lysine biosynthesis via DAP pathway; DL-2,6-diaminopimelate from LL-2,6-diaminopimelate: step 1/1. Its function is as follows. Catalyzes the stereoinversion of LL-2,6-diaminopimelate (L,L-DAP) to meso-diaminopimelate (meso-DAP), a precursor of L-lysine and an essential component of the bacterial peptidoglycan. The chain is Diaminopimelate epimerase from Laribacter hongkongensis (strain HLHK9).